A 149-amino-acid polypeptide reads, in one-letter code: Conglutin delta 3 (149 aa).

A signal peptide spans Met1–Ala22. Intrachain disulfides connect Cys30–Cys98, Cys42–Cys86, Cys87–Cys134, and Cys100–Cys142.

The protein belongs to the 2S seed storage albumins family. Heterodimer of a small chain and a large chain; disulfide-linked.

It localises to the endoplasmic reticulum. This is Conglutin delta 3 from Lupinus angustifolius (Narrow-leaved blue lupine).